A 683-amino-acid polypeptide reads, in one-letter code: MSEPRKILVTSALPYANGSIHLGHMLEYIQTDMWVRFQKHRGNQCIYVCADDAHGSAIMLRAEKEGITPEQLIANVQAEHSADFAEFLVDFDNFHSTHSDENRELSSQIYLRLKEAGHIATRSITQYFDPEKKMFLADRFIKGTCPKCGTEDQYGDNCEKCGATYAPTDLKNPKSAISGATPVLKDSQHFFFKLPDFQQMLQTWTRSGTLQDAVANKIAEWLDAGLQQWDISRDAPYFGFEIPGEPGKYFYVWLDAPIGYMASFKNLCDRTPELDFDAFWAKDSTAELYHFIGKDIVNFHALFWPAMLEGSGYRKPTGIAVHGYLTVNGQKMSKSRGTFIKARTYLDHLSPEYLRYYYASKLGRGVDDLDLNLEDFVQKVNSDLVGKVVNIASRCAGFIHKGNAGVLVAENAAPELTDAFLAAAPSIADAYEARDFARAMREIMGLADRANAWIADKAPWSLNKQEGKQAEVQAICATGVNLFRQLVIFLKPVLPLLAADAEAFLNVAPLTWNDHATLLSNHQLNEFKPLMTRIDPVKVQAMTDASKEDLVASQTDTGESAPAGNGELAKDPISAEIEFDAFAAVDLRVALIVKAEAVEGADKLLRLTLDLGGEQRNVFSGIKSAYPDPSKLDGRLTMMIANLKPRKMKFGISEGMVMAAGPGGEEIYLLSPDSGAKPGQRIK.

Residues 14–24 (PYANGSIHLGH) carry the 'HIGH' region motif. 4 residues coordinate Zn(2+): Cys145, Cys148, Cys158, and Cys161. Residues 331–335 (KMSKS) carry the 'KMSKS' region motif. Lys334 contributes to the ATP binding site. In terms of domain architecture, tRNA-binding spans 581–683 (AFAAVDLRVA…SGAKPGQRIK (103 aa)).

This sequence belongs to the class-I aminoacyl-tRNA synthetase family. MetG type 1 subfamily. Homodimer. Zn(2+) serves as cofactor.

The protein localises to the cytoplasm. The catalysed reaction is tRNA(Met) + L-methionine + ATP = L-methionyl-tRNA(Met) + AMP + diphosphate. Functionally, is required not only for elongation of protein synthesis but also for the initiation of all mRNA translation through initiator tRNA(fMet) aminoacylation. This Pseudomonas fluorescens (strain SBW25) protein is Methionine--tRNA ligase.